Consider the following 341-residue polypeptide: Anthranilate phosphoribosyltransferase (341 aa).

Residues Gly82, 85–86 (GD), Thr90, 92–95 (NIST), 110–118 (KHGGRSVSS), and Ser122 contribute to the 5-phospho-alpha-D-ribose 1-diphosphate site. Residue Gly82 coordinates anthranilate. Ser94 contributes to the Mg(2+) binding site. Arg168 provides a ligand contact to anthranilate. Mg(2+)-binding residues include Asp227 and Glu228.

It belongs to the anthranilate phosphoribosyltransferase family. As to quaternary structure, homodimer. Mg(2+) serves as cofactor.

The enzyme catalyses N-(5-phospho-beta-D-ribosyl)anthranilate + diphosphate = 5-phospho-alpha-D-ribose 1-diphosphate + anthranilate. Its pathway is amino-acid biosynthesis; L-tryptophan biosynthesis; L-tryptophan from chorismate: step 2/5. Its function is as follows. Catalyzes the transfer of the phosphoribosyl group of 5-phosphorylribose-1-pyrophosphate (PRPP) to anthranilate to yield N-(5'-phosphoribosyl)-anthranilate (PRA). This is Anthranilate phosphoribosyltransferase from Nitrosomonas eutropha (strain DSM 101675 / C91 / Nm57).